Reading from the N-terminus, the 464-residue chain is Uronate isomerase (464 aa).

This sequence belongs to the metallo-dependent hydrolases superfamily. Uronate isomerase family.

It catalyses the reaction D-glucuronate = D-fructuronate. The enzyme catalyses aldehydo-D-galacturonate = keto-D-tagaturonate. The protein operates within carbohydrate metabolism; pentose and glucuronate interconversion. This chain is Uronate isomerase, found in Caldicellulosiruptor saccharolyticus (strain ATCC 43494 / DSM 8903 / Tp8T 6331).